The sequence spans 464 residues: GDNF family receptor alpha-2 (464 aa).

Positions 1-21 are cleaved as a signal peptide; that stretch reads MILANAFCLFFFLDETLRSLA. 14 disulfide bridges follow: Cys40-Cys93, Cys47-Cys53, Cys63-Cys78, Cys95-Cys105, Cys161-Cys222, Cys168-Cys174, Cys185-Cys200, Cys195-Cys241, Cys224-Cys229, Cys251-Cys323, Cys258-Cys264, Cys275-Cys293, Cys285-Cys347, and Cys325-Cys335. N-linked (GlcNAc...) asparagine glycosylation occurs at Asn52. Asn357 carries N-linked (GlcNAc...) asparagine glycosylation. Residues 360–374 show a composition bias toward polar residues; it reads DVNLSPKSPPFQATQ. The disordered stretch occupies residues 360-392; that stretch reads DVNLSPKSPPFQATQAPRVDKTPSLPDDLSDST. A compositionally biased stretch (low complexity) spans 381 to 392; sequence TPSLPDDLSDST. The N-linked (GlcNAc...) asparagine glycan is linked to Asn413. Residue Asn440 is the site of GPI-anchor amidated asparagine attachment. Positions 441-464 are cleaved as a propeptide — removed in mature form; sequence SGPRRTRPSAALTAASFLMLKLAL.

The protein belongs to the GDNFR family. Interacts with NRTN ligand and RET: forms a 2:2:2 ternary complex composed of NRTN ligand, GFRA2 and RET receptor. Also forms a 4:4:4 tetrameric complex composed of 4 copies of NRTN ligand, GFRA2 and RET receptor, which prevents endocytosis of RET. Interacts with SORL1.

The protein localises to the cell membrane. In terms of biological role, receptor for neurturin (NRTN), a growth factor that supports the survival of sympathetic neurons. NRTN-binding leads to autophosphorylation and activation of the RET receptor. Also able to mediate GDNF signaling through the RET tyrosine kinase receptor. This Bos taurus (Bovine) protein is GDNF family receptor alpha-2 (GFRA2).